Consider the following 94-residue polypeptide: Protein SKIP34 (94 aa).

Residues 1-27 (MCYGHNQSLSSRSSLRRRSHDGEDDSV) are disordered. A coiled-coil region spans residues 23–61 (EDDSVVDDLRDRLAETEARLRRARAREAELSRRLEHMKR).

Interacts with SPK1B/ASK2.

The polypeptide is Protein SKIP34 (SKIP34) (Arabidopsis thaliana (Mouse-ear cress)).